A 37-amino-acid chain; its full sequence is Large ribosomal subunit protein bL36 (37 aa).

It belongs to the bacterial ribosomal protein bL36 family.

The sequence is that of Large ribosomal subunit protein bL36 from Endomicrobium trichonymphae.